The primary structure comprises 247 residues: UPF0259 membrane protein BUAP5A_271 (247 aa).

A run of 6 helical transmembrane segments spans residues 20–40 (IGAI…IDMF), 85–105 (IMES…LISV), 114–134 (IVSS…LNFL), 137–157 (FIIQ…SIIL), 188–208 (IIGP…MLLA), and 218–238 (LFLI…IYLF).

Belongs to the UPF0259 family.

The protein localises to the cell membrane. In Buchnera aphidicola subsp. Acyrthosiphon pisum (strain 5A), this protein is UPF0259 membrane protein BUAP5A_271.